A 94-amino-acid polypeptide reads, in one-letter code: Neurotoxin LmNaTx45.2 (94 aa).

The N-terminal stretch at 1–18 is a signal peptide; sequence MKLAILSLFLVFQIGVES. One can recognise an LCN-type CS-alpha/beta domain in the interval 20–86; the sequence is KNGFALDHYG…IGDSRKNYCD (67 aa). Cystine bridges form between cysteine 34–cysteine 85, cysteine 44–cysteine 63, cysteine 48–cysteine 65, and cysteine 59–cysteine 85.

This sequence belongs to the long (4 C-C) scorpion toxin superfamily. Sodium channel inhibitor family. Beta subfamily. As to expression, expressed by the venom gland.

The protein localises to the secreted. Functionally, binds voltage-independently at site-4 of sodium channels (Nav) and shift the voltage of activation toward more negative potentials thereby affecting sodium channel activation and promoting spontaneous and repetitive firing. The polypeptide is Neurotoxin LmNaTx45.2 (Lychas mucronatus (Chinese swimming scorpion)).